We begin with the raw amino-acid sequence, 502 residues long: Glycerol kinase (502 aa).

Thr14 serves as a coordination point for ADP. ATP is bound by residues Thr14, Thr15, and Ser16. Thr14 serves as a coordination point for sn-glycerol 3-phosphate. Residue Arg18 participates in ADP binding. Sn-glycerol 3-phosphate-binding residues include Arg84, Glu85, Tyr136, and Asp246. Glycerol-binding residues include Arg84, Glu85, Tyr136, Asp246, and Gln247. Residues Thr268 and Gly311 each coordinate ADP. Positions 268, 311, 315, and 412 each coordinate ATP. Residues Gly412 and Asn416 each contribute to the ADP site.

This sequence belongs to the FGGY kinase family. As to quaternary structure, homotetramer and homodimer (in equilibrium). Heterodimer with EIIA-Glc. Binds 1 zinc ion per glycerol kinase EIIA-Glc dimer. The zinc ion is important for dimerization.

The enzyme catalyses glycerol + ATP = sn-glycerol 3-phosphate + ADP + H(+). Its pathway is polyol metabolism; glycerol degradation via glycerol kinase pathway; sn-glycerol 3-phosphate from glycerol: step 1/1. Activity of this regulatory enzyme is affected by several metabolites. Allosterically and non-competitively inhibited by fructose 1,6-bisphosphate (FBP) and unphosphorylated phosphocarrier protein EIIA-Glc (III-Glc), an integral component of the bacterial phosphotransferase (PTS) system. Functionally, key enzyme in the regulation of glycerol uptake and metabolism. Catalyzes the phosphorylation of glycerol to yield sn-glycerol 3-phosphate. In Escherichia coli O8 (strain IAI1), this protein is Glycerol kinase.